A 340-amino-acid chain; its full sequence is Adenosine deaminase (340 aa).

His-15 and His-17 together coordinate Zn(2+). The substrate site is built by His-17, Asp-19, and Gly-172. Position 199 (His-199) interacts with Zn(2+). The active-site Proton donor is the Glu-202. Asp-279 is a binding site for Zn(2+).

The protein belongs to the metallo-dependent hydrolases superfamily. Adenosine and AMP deaminases family. Adenosine deaminase subfamily. Requires Zn(2+) as cofactor.

It carries out the reaction adenosine + H2O + H(+) = inosine + NH4(+). It catalyses the reaction 2'-deoxyadenosine + H2O + H(+) = 2'-deoxyinosine + NH4(+). Catalyzes the hydrolytic deamination of adenosine and 2-deoxyadenosine. The sequence is that of Adenosine deaminase from Streptococcus agalactiae serotype Ia (strain ATCC 27591 / A909 / CDC SS700).